We begin with the raw amino-acid sequence, 289 residues long: MAEISAKAVKDLRDKTGVGMMECKKALQETDGDMEKAVEFLRKRGAAMAAKRADREAKEGVIAVKTTEDSRNGVIVEVNCETDFVARGEDFTKFAEAISEIALANFPENKEALLALSMGDDYQGQTVEQAIEAMTGKIGEKIEISKVGVITSNDSVVTAYVHPGAKLATLVEIGPASTDEVEDLSKDVAMQIAAAAPLVVDRSAVPQEKLAQEAEIYKQQALREGKPEKFVEKIVTGRIEKYYQDVVLLEQAFIKDSSKTVSDVVKETSKRLNKTIEIRCFLRYQLGEK.

Positions 82-85 (TDFV) are involved in Mg(2+) ion dislocation from EF-Tu.

This sequence belongs to the EF-Ts family.

The protein resides in the cytoplasm. Functionally, associates with the EF-Tu.GDP complex and induces the exchange of GDP to GTP. It remains bound to the aminoacyl-tRNA.EF-Tu.GTP complex up to the GTP hydrolysis stage on the ribosome. The sequence is that of Elongation factor Ts from Chloroherpeton thalassium (strain ATCC 35110 / GB-78).